We begin with the raw amino-acid sequence, 144 residues long: TSC22 domain family protein 1 (144 aa).

Residues 77–98 (LKEQIKELIEKNSQLEQENNLL) are leucine-zipper. A disordered region spans residues 109-144 (QFQAQLQTGSPPATTQPQGTTQPPAQPASQGSGPTA). Low complexity predominate over residues 115–144 (QTGSPPATTQPQGTTQPPAQPASQGSGPTA).

This sequence belongs to the TSC-22/Dip/Bun family. Forms homodimers. Forms a heterodimer with TSC22D4/THG1. Interacts with histone H1-2. Interacts with GNL3.

Its subcellular location is the cytoplasm. It is found in the nucleus. Transcriptional repressor. Plays a role in the repression of hematopoietic precursor cell growth. Promotes IL2 deprivation-induced apoptosis in T-lymphocytes, via repression of TSC22D3/GILZ transcription and activation of the caspase cascade. Positively regulates cell death in response to TGFB3 during mammary gland involution. The chain is TSC22 domain family protein 1 from Bos taurus (Bovine).